We begin with the raw amino-acid sequence, 584 residues long: Arginine--tRNA ligase (584 aa).

A 'HIGH' region motif is present at residues 127–137 (PNTNKPLHVGH).

It belongs to the class-I aminoacyl-tRNA synthetase family. Monomer.

It is found in the cytoplasm. The enzyme catalyses tRNA(Arg) + L-arginine + ATP = L-arginyl-tRNA(Arg) + AMP + diphosphate. This Borrelia turicatae (strain 91E135) protein is Arginine--tRNA ligase.